The following is a 646-amino-acid chain: Tyrosine-protein kinase MasK (646 aa).

The Periplasmic segment spans residues 1-415 (MSPPQTTLPV…PTAGGRRWRT (415 aa)). In terms of domain architecture, Protein kinase spans 25 to 300 (YVLVRKLAEG…AFADALETFL (276 aa)). ATP-binding positions include 31–39 (LAEGGMAEI) and Lys-57. Residue Asp-163 is the Proton acceptor of the active site. A disordered region spans residues 373 to 410 (TSAQRPGMSMRPSSPGVPAHGAASRGSTSPESAPTAGG). The helical transmembrane segment at 416–433 (LAVGLAGGLMLAAAGIVG) threads the bilayer. Over 434 to 646 (YRQWMTTPAS…VMPFSWRVTQ (213 aa)) the chain is Cytoplasmic. The interval 521 to 547 (AGAASDVEAEADEEGADAAPVRSKKAS) is disordered. The segment covering 527 to 536 (VEAEADEEGA) has biased composition (acidic residues).

This sequence belongs to the protein kinase superfamily. Tyr protein kinase family. In terms of assembly, interacts with MglA. Autophosphorylated.

It is found in the cell inner membrane. It catalyses the reaction L-tyrosyl-[protein] + ATP = O-phospho-L-tyrosyl-[protein] + ADP + H(+). In terms of biological role, essential for growth. Interacts with MglA to control social gliding motility. The protein is Tyrosine-protein kinase MasK (masK) of Myxococcus xanthus (strain DK1622).